We begin with the raw amino-acid sequence, 652 residues long: Chaperone protein HtpG (652 aa).

An a; substrate-binding region spans residues 1 to 348; it reads MATDAHKETL…SDDLPLNVSR (348 aa). Residues 349 to 565 form a b region; the sequence is ELLQHNPLLD…EYDFGMGMQR (217 aa). Residues 566–652 form a c region; the sequence is LLKAAGHAMP…EAKSNAARGD (87 aa).

It belongs to the heat shock protein 90 family. As to quaternary structure, homodimer.

Its subcellular location is the cytoplasm. In terms of biological role, molecular chaperone. Has ATPase activity. The chain is Chaperone protein HtpG from Alkalilimnicola ehrlichii (strain ATCC BAA-1101 / DSM 17681 / MLHE-1).